Reading from the N-terminus, the 347-residue chain is Bifunctional methylenetetrahydrofolate dehydrogenase/cyclohydrolase 2, mitochondrial (347 aa).

Substrate contacts are provided by residues 98–102 (YVRNK) and 145–147 (VQL). Residues 214–216 (GRS) and R247 each bind NAD(+). A substrate-binding site is contributed by 323-327 (PGGVG).

Belongs to the tetrahydrofolate dehydrogenase/cyclohydrolase family. Requires Mg(2+) as cofactor.

It localises to the mitochondrion inner membrane. The enzyme catalyses (6R)-5,10-methylene-5,6,7,8-tetrahydrofolate + NAD(+) = (6R)-5,10-methenyltetrahydrofolate + NADH. The catalysed reaction is (6R)-5,10-methenyltetrahydrofolate + H2O = (6R)-10-formyltetrahydrofolate + H(+). It catalyses the reaction (6R)-5,10-methylene-5,6,7,8-tetrahydrofolate + NADP(+) = (6R)-5,10-methenyltetrahydrofolate + NADPH. It participates in one-carbon metabolism; tetrahydrofolate interconversion. Its function is as follows. Bifunctional mitochondrial folate-interconverting enzyme that has both NAD/NADP-dependent methylenetetrahydrofolate dehydrogenase and methenyltetrahydrofolate cyclohydrolase activities. The chain is Bifunctional methylenetetrahydrofolate dehydrogenase/cyclohydrolase 2, mitochondrial from Callithrix jacchus (White-tufted-ear marmoset).